The primary structure comprises 95 residues: Small ribosomal subunit protein uS15 (95 aa).

The protein belongs to the universal ribosomal protein uS15 family. As to quaternary structure, part of the 30S ribosomal subunit. Forms a bridge to the 50S subunit in the 70S ribosome, contacting the 23S rRNA.

Its function is as follows. One of the primary rRNA binding proteins, it binds directly to 16S rRNA where it helps nucleate assembly of the platform of the 30S subunit by binding and bridging several RNA helices of the 16S rRNA. Functionally, forms an intersubunit bridge (bridge B4) with the 23S rRNA of the 50S subunit in the ribosome. In Sulfurihydrogenibium sp. (strain YO3AOP1), this protein is Small ribosomal subunit protein uS15.